Here is a 299-residue protein sequence, read N- to C-terminus: CRISPR system Cms protein Csm4 (299 aa).

Belongs to the CRISPR-associated Csm4 family. In terms of assembly, part of the Csm effector complex that includes at least Cas10(1), Csm2(3), Csm3(5), Csm4(1), Csm5(1) and mature crRNA. The Csm complex is elongated and slightly twisted with a maximal length of 215 Angstroms and a diameter of 75-80 Angstroms. It has been modeled to have a central protein filamant of Csm3 subunits along which the dsRNA helix of paired crRNA and target RNA binds. The filament is capped at one end by Cas10 and Csm4 and at the other end by Csm5; ssDNA is thought to bind to the N-terminal HD domain of Cas10. Csm with a precursor crRNA does not include Csm5, while Cas6, the enzyme probably involved in pre-crRNA processing, is found associated with a subset of the Csm complex.

In terms of biological role, CRISPR (clustered regularly interspaced short palindromic repeat) is an adaptive immune system that provides protection against mobile genetic elements (viruses, transposable elements and conjugative plasmids). CRISPR clusters contain spacers, sequences complementary to antecedent mobile elements, and target invading nucleic acids. CRISPR clusters are transcribed and processed into CRISPR RNA (crRNA). The type III-A Csm effector complex binds crRNA and acts as a crRNA-guided RNase, DNase and cyclic oligoadenylate synthase; binding of target RNA cognate to the crRNA is required for all activities. In a heterologous host this Csm effector complex restricts ssRNA phage MS2, suggesting it may target RNA viruses in vivo. Functionally, csm functions as a non-specific ssDNase. Base-pairing between crRNA and target RNA to form a ternary Csm complex activates a ssDNase activity; target RNA cleavage suppresses the ssDNase, a temporal control that prevents uncontrolled DNA degradation. Viral RNA transcripts probably tether the Csm complex to the viral genome, recruiting Cas10 ssDNA activity which is able to degrade DNA in the transcription bubble, spatially controlling the DNase activity. The subunit probably binds to the 5' handle of the crRNA, helping in discrimination between self- and non-self. This Streptococcus thermophilus protein is CRISPR system Cms protein Csm4.